Here is a 132-residue protein sequence, read N- to C-terminus: uncharacterized protein (132 aa).

This is an uncharacterized protein from Bacillus subtilis (strain 168).